Consider the following 510-residue polypeptide: O-acetyltransferase pyr7 (510 aa).

Belongs to the fumigaclavine B O-acetyltransferase family.

It participates in secondary metabolite biosynthesis; terpenoid biosynthesis. Its function is as follows. O-acetyltransferase; part of the gene cluster that mediates the biosynthesis of pyripyropene A, a specific human acyl-coenzyme A:cholesterol acyltransferase 2 inhibitor. The first step of the pathway is the synthesis of nicotinyl-CoA from nicotinic acid by the nicotinic acid-CoA ligase pyr1. Nicotinyl-CoA is then a substrate of polyketide synthase pyr2 to produce 4-hydroxy-6-(3-pyridinyl)-2H-pyran-2-one (HPPO) which is further prenylated by the polyprenyl transferase pyr6 to yield farnesyl-HPPO. The next steps consist of an epoxidation of farnesyl-HPPO to epoxyfarnesyl-HPPO by FAD-dependent monooxygenase pyr5 and a cyclization of the terpenoid portion by the terpene cyclase pyr4 to yield deacetyl-pyripyropene E. The 2 cytochrome P450 monooxygenases pyr3 and pyr9, and the 2 acetyltransferases pyr7 and pyr8 are involved in the conversion of deacetyl-pyripyropene E into pyripyropene A through several cycles of oxidation and acetylation steps. Pyr7 acetylates deacetyl-pyripyropene E to pyripyropene E which is oxidized to 11-deacetyl-pyripyropene O by pyr3, which is in turn acetylated into pyripyropene O by pyr8. Pyripyropene O is then oxidized to deacetyl-pyripyropene A by pyr9. Deacetyl-pyripyropene A is finally acetylated to pyripyropene A by pyr8. The polypeptide is O-acetyltransferase pyr7 (Aspergillus fumigatus (strain ATCC MYA-4609 / CBS 101355 / FGSC A1100 / Af293) (Neosartorya fumigata)).